The primary structure comprises 130 residues: uncharacterized protein (130 aa).

A run of 2 helical transmembrane segments spans residues 35–57 (FLIT…FISL) and 72–91 (IVFF…LLLL).

It is found in the cell membrane. This is an uncharacterized protein from Pasteurella multocida (strain Pm70).